We begin with the raw amino-acid sequence, 309 residues long: Ornithine carbamoyltransferase (309 aa).

Carbamoyl phosphate contacts are provided by residues 56–59 (STRT), Q83, R107, and 134–137 (HPCQ). L-ornithine-binding positions include N165, D223, and 227 to 228 (SM). Residues 263–264 (CL) and R291 each bind carbamoyl phosphate.

This sequence belongs to the aspartate/ornithine carbamoyltransferase superfamily. OTCase family.

Its subcellular location is the cytoplasm. The enzyme catalyses carbamoyl phosphate + L-ornithine = L-citrulline + phosphate + H(+). The protein operates within amino-acid biosynthesis; L-arginine biosynthesis; L-arginine from L-ornithine and carbamoyl phosphate: step 1/3. Reversibly catalyzes the transfer of the carbamoyl group from carbamoyl phosphate (CP) to the N(epsilon) atom of ornithine (ORN) to produce L-citrulline. The sequence is that of Ornithine carbamoyltransferase from Burkholderia cenocepacia (strain HI2424).